Consider the following 153-residue polypeptide: UPF0102 protein Pnap_0271 (153 aa).

Belongs to the UPF0102 family.

This chain is UPF0102 protein Pnap_0271, found in Polaromonas naphthalenivorans (strain CJ2).